Reading from the N-terminus, the 102-residue chain is Omega-hexatoxin-Hi2a (102 aa).

The N-terminal stretch at 1 to 23 (MKFSKLSLTLALILTQALLVVCG) is a signal peptide. The propeptide occupies 24-56 (KINEDFMENGLESHALHDEIRKPIDTEKADAER). Intrachain disulfides connect C61-C75, C68-C81, and C74-C86. L98 is modified (leucine amide). A propeptide spanning residues 100 to 102 (RAL) is cleaved from the precursor.

Belongs to the neurotoxin 15 family. 02 (omega-actx) subfamily. As to expression, expressed by the venom gland.

Its subcellular location is the secreted. Functionally, potent inhibitor of insect, but not mammalian, voltage-gated calcium channels (Cav). This chain is Omega-hexatoxin-Hi2a, found in Hadronyche infensa (Fraser island funnel-web spider).